Reading from the N-terminus, the 257-residue chain is Hydroxyacylglutathione hydrolase (257 aa).

Zn(2+)-binding residues include His54, His56, Asp58, His59, His109, Asp129, and His167.

Belongs to the metallo-beta-lactamase superfamily. Glyoxalase II family. Monomer. Zn(2+) serves as cofactor.

It carries out the reaction an S-(2-hydroxyacyl)glutathione + H2O = a 2-hydroxy carboxylate + glutathione + H(+). It functions in the pathway secondary metabolite metabolism; methylglyoxal degradation; (R)-lactate from methylglyoxal: step 2/2. Functionally, thiolesterase that catalyzes the hydrolysis of S-D-lactoyl-glutathione to form glutathione and D-lactic acid. This chain is Hydroxyacylglutathione hydrolase, found in Marinomonas sp. (strain MWYL1).